A 307-amino-acid chain; its full sequence is Serine/threonine-protein phosphatase 4 catalytic subunit (307 aa).

Residues Asp-54, His-56, Asp-82, and Asn-114 each contribute to the Mn(2+) site. His-115 acts as the Proton donor in catalysis. The Mn(2+) site is built by His-164 and His-238. The residue at position 307 (Leu-307) is a Leucine methyl ester.

It belongs to the PPP phosphatase family. PP-4 (PP-X) subfamily. As to quaternary structure, serine/threonine-protein phosphatase 4 (PP4) occurs in different assemblies of the catalytic and one or more regulatory subunits. Probably part of a PP4 PPP4C-PPP4R2-PPP4R3 complex containing Pp4-19C, PPP4R2r and flfl. Interacts with Ptpa; thereby mediating basal localization of the Miranda (Mira) complex; probably by dephosphorylation of Mira. Mn(2+) is required as a cofactor. Reversibly methyl esterified on Leu-307 by leucine carboxyl methyltransferase 1 (LCMT1) and protein phosphatase methylesterase 1 (PPME1). Carboxyl methylation influences the affinity of the catalytic subunit for the different regulatory subunits, thereby modulating the PP2A holoenzyme's substrate specificity, enzyme activity and cellular localization.

It is found in the cytoplasm. The protein localises to the nucleus. It localises to the cytoskeleton. Its subcellular location is the microtubule organizing center. The protein resides in the centrosome. It catalyses the reaction O-phospho-L-seryl-[protein] + H2O = L-seryl-[protein] + phosphate. The catalysed reaction is O-phospho-L-threonyl-[protein] + H2O = L-threonyl-[protein] + phosphate. In terms of biological role, protein phosphatase that regulates many processes such as microtubule organization at centrosomes. The probable PP4 complex Pp4-19C-PPP4R2r-flfl (PPP4C-PPP4R2-PPP4R3) is required to prevent caspase-induced cell death (in vitro). The sequence is that of Serine/threonine-protein phosphatase 4 catalytic subunit (Pp4-19C) from Drosophila melanogaster (Fruit fly).